The following is a 189-amino-acid chain: Putative dihydrofolate reductase (189 aa).

The 183-residue stretch at 3 to 185 folds into the DHFR domain; that stretch reads KMNLIVAMDA…LKFEFCKWKV (183 aa). NADP(+) is bound by residues alanine 9 and 15–21; that span reads GIGKNGV. 29–34 serves as a coordination point for substrate; it reads DMQYFA. 53–55 provides a ligand contact to NADP(+); sequence RKC. Residue arginine 69 coordinates substrate. Residues 75-77 and 115-122 each bind NADP(+); these read SRQ and GGAEIYDL.

Belongs to the dihydrofolate reductase family.

The catalysed reaction is (6S)-5,6,7,8-tetrahydrofolate + NADP(+) = 7,8-dihydrofolate + NADPH + H(+). It participates in cofactor biosynthesis; tetrahydrofolate biosynthesis; 5,6,7,8-tetrahydrofolate from 7,8-dihydrofolate: step 1/1. Key enzyme in folate metabolism. Catalyzes an essential reaction for de novo glycine and purine synthesis, and for DNA precursor synthesis. This Caenorhabditis elegans protein is Putative dihydrofolate reductase (dhfr-1).